The following is a 192-amino-acid chain: Ubiquitin-conjugating enzyme E2 1 (192 aa).

The disordered stretch occupies residues 1-28; it reads MTTPSRRRLMRDFKKLQEDPPAGVSGAP. A UBC core domain is found at 4-150; the sequence is PSRRRLMRDF…VQQIVEQSWL (147 aa). Cys88 functions as the Glycyl thioester intermediate in the catalytic mechanism. A disordered region spans residues 171–192; it reads AAPGANDADDDRMDEGASGSNA.

It belongs to the ubiquitin-conjugating enzyme family. As to quaternary structure, interacts with ubr-1 and rfp-1. Interacts with ubc-13.

The catalysed reaction is S-ubiquitinyl-[E1 ubiquitin-activating enzyme]-L-cysteine + [E2 ubiquitin-conjugating enzyme]-L-cysteine = [E1 ubiquitin-activating enzyme]-L-cysteine + S-ubiquitinyl-[E2 ubiquitin-conjugating enzyme]-L-cysteine.. It participates in protein modification; protein ubiquitination. Its function is as follows. Catalyzes the covalent attachment of ubiquitin to other proteins. This Caenorhabditis elegans protein is Ubiquitin-conjugating enzyme E2 1 (ubc-1).